A 72-amino-acid polypeptide reads, in one-letter code: Palustrin-2CG1 (72 aa).

The first 22 residues, 1-22, serve as a signal peptide directing secretion; that stretch reads MFTMKKPLLLLFFLGTISLSLC. A propeptide spans 23–39 (removed in mature form); the sequence is QEERGADEDDGEMTEEV. The cysteines at positions 64 and 70 are disulfide-linked.

As to expression, expressed by the skin glands.

Its subcellular location is the secreted. Antimicrobial peptide active against a variety of Gram-positive and some Gram-negative bacterial strains. Has antifungal activity against a slime mold isolate. Has hemolytic activity against human erythrocytes. The sequence is that of Palustrin-2CG1 from Amolops chunganensis (Chungan torrent frog).